Reading from the N-terminus, the 477-residue chain is Angiotensinogen (477 aa).

The N-terminal stretch at M1–G24 is a signal peptide. A disulfide bond links C42 and C161. N-linked (GlcNAc...) asparagine glycans are attached at residues N295 and N319.

The protein belongs to the serpin family. In response to low blood pressure, the enzyme renin/REN cleaves angiotensinogen to produce angiotensin-1. Angiotensin-1 is a substrate of ACE (angiotensin converting enzyme) that removes a dipeptide to yield the physiologically active peptide angiotensin-2. Angiotensin-1 and angiotensin-2 can be further processed to generate angiotensin-3, angiotensin-4. Angiotensin 1-9 is cleaved from angiotensin-1 by ACE2 and can be further processed by ACE to produce angiotensin 1-7, angiotensin 1-5 and angiotensin 1-4. Angiotensin 1-7 has also been proposed to be cleaved from angiotensin-2 by ACE2 or from angiotensin-1 by MME (neprilysin). In terms of processing, the disulfide bond is labile. Angiotensinogen is present in the circulation in a near 40:60 ratio with the oxidized disulfide-bonded form, which preferentially interacts with receptor-bound renin.

It is found in the secreted. Functionally, essential component of the renin-angiotensin system (RAS), a potent regulator of blood pressure, body fluid and electrolyte homeostasis. Its function is as follows. Acts directly on vascular smooth muscle as a potent vasoconstrictor, affects cardiac contractility and heart rate through its action on the sympathetic nervous system, and alters renal sodium and water absorption through its ability to stimulate the zona glomerulosa cells of the adrenal cortex to synthesize and secrete aldosterone. Acts by binding to angiotensin receptors AGTR1 and AGTR2. Also binds the DEAR/FBXW7-AS1 receptor. Stimulates aldosterone release. In terms of biological role, is a ligand for the G-protein coupled receptor MAS1. Has vasodilator and antidiuretic effects. Has an antithrombotic effect that involves MAS1-mediated release of nitric oxide from platelets. The sequence is that of Angiotensinogen (Agt) from Rattus norvegicus (Rat).